The primary structure comprises 270 residues: 25S rRNA adenine-N(1) methyltransferase (270 aa).

The S-adenosyl-L-methionine site is built by Gly-111 and Asp-131.

It belongs to the BMT2 family.

It is found in the nucleus. It localises to the nucleolus. S-adenosyl-L-methionine-dependent methyltransferase that specifically methylates the N(1) position of an adenine present in helix 65 in 25S rRNA. This chain is 25S rRNA adenine-N(1) methyltransferase, found in Schizosaccharomyces pombe (strain 972 / ATCC 24843) (Fission yeast).